The primary structure comprises 284 residues: uncharacterized protein (284 aa).

Residues 12–32 (ILFILFVVAFCVYLVPRVAIN) traverse the membrane as a helical segment.

Belongs to the serine esterase family.

It localises to the membrane. This is an uncharacterized protein from Escherichia coli O157:H7.